The chain runs to 506 residues: Hippocampus abundant transcript-like protein 1 (506 aa).

The disordered stretch occupies residues 1–25; that stretch reads MSVEPPPELEEKAASEPEAGAMPEK. Topologically, residues 1-49 are extracellular; it reads MSVEPPPELEEKAASEPEAGAMPEKRAGAQAAGSTWLQGFGRPSVYHAA. A helical transmembrane segment spans residues 50–70; that stretch reads IVIFLEFFAWGLLTTPMLTVL. Residues 71–82 lie on the Cytoplasmic side of the membrane; that stretch reads HETFSQHTFLMN. A helical transmembrane segment spans residues 83–103; that stretch reads GLIQGVKGLLSFLSAPLIGAL. Over 104–111 the chain is Extracellular; the sequence is SDVWGRKP. Residues 112-132 form a helical membrane-spanning segment; it reads FLLGTVFFTCFPIPLMRISPW. Residues 133-134 lie on the Cytoplasmic side of the membrane; it reads WY. A helical membrane pass occupies residues 135–155; it reads FAMISVSGVFSVTFSVIFAYV. Over 156 to 168 the chain is Extracellular; the sequence is ADVTQEHERSTAY. The chain crosses the membrane as a helical span at residues 169–189; it reads GWVSATFAASLVSSPAIGAYL. At 190 to 196 the chain is on the cytoplasmic side; that stretch reads SASYGDS. A helical membrane pass occupies residues 197-217; it reads LVVLVATVVALLDICFILVAV. Residues 218-255 lie on the Extracellular side of the membrane; the sequence is PESLPEKMRPVSWGAQISWKQADPFASLKKVGKDSTVL. A helical transmembrane segment spans residues 256 to 276; that stretch reads LICITVFLSYLPEAGQYSSFF. The Cytoplasmic segment spans residues 277–281; the sequence is LYLRQ. Residues 282-302 form a helical membrane-spanning segment; that stretch reads VIGFGSVKIAAFIAMVGILSI. Topologically, residues 303–319 are extracellular; it reads VAQTAFLSILMRSLGNK. Residues 320 to 340 form a helical membrane-spanning segment; that stretch reads NTVLLGLGFQMLQLAWYGFGS. A topological domain (cytoplasmic) is located at residue Q341. Residues 342 to 362 form a helical membrane-spanning segment; the sequence is AWMMWAAGTVAAMSSITFPAI. Residues 363-387 lie on the Extracellular side of the membrane; sequence SALVSRNAESDQQGVAQGIITGIRG. The helical transmembrane segment at 388–408 threads the bilayer; sequence LCNGLGPALYGFIFYMFHVEL. At 409–428 the chain is on the cytoplasmic side; that stretch reads TELGPKLNSNNVPLQGAVIP. The chain crosses the membrane as a helical span at residues 429-449; it reads GPPFLFGACIVLMSFLVALFI. Over 450-506 the chain is Extracellular; it reads PEYSKASGVQKHSNSSSGSLTNTPERGSDEDIEPLLQDSSIWELSSFEEPGNQCTEL. The interval 457-481 is disordered; that stretch reads GVQKHSNSSSGSLTNTPERGSDEDI. A compositionally biased stretch (polar residues) spans 459–474; the sequence is QKHSNSSSGSLTNTPE. N463 is a glycosylation site (N-linked (GlcNAc...) asparagine).

The protein belongs to the major facilitator superfamily.

It localises to the membrane. The polypeptide is Hippocampus abundant transcript-like protein 1 (Homo sapiens (Human)).